Here is a 144-residue protein sequence, read N- to C-terminus: UPF0299 membrane protein MS1271 (144 aa).

4 consecutive transmembrane segments (helical) span residues 5–25 (IFLF…GEGI), 28–48 (LIPI…IGLT), 57–77 (VFFG…PVSV), and 92–112 (SLLI…GFLG).

It belongs to the UPF0299 family.

It localises to the cell inner membrane. The polypeptide is UPF0299 membrane protein MS1271 (Mannheimia succiniciproducens (strain KCTC 0769BP / MBEL55E)).